The following is a 129-amino-acid chain: UPF0344 protein SAB0838 (129 aa).

A run of 4 helical transmembrane segments spans residues 1–21, 36–56, 67–87, and 99–119; these read MLHL…ATYL, LHMV…WILI, MLLT…EVSI, and MFWI…ILPL.

The protein belongs to the UPF0344 family.

Its subcellular location is the cell membrane. The sequence is that of UPF0344 protein SAB0838 from Staphylococcus aureus (strain bovine RF122 / ET3-1).